A 218-amino-acid polypeptide reads, in one-letter code: Oocyte-specific homeobox protein 7 (218 aa).

Residues 40–72 (SPLVTPGSTMQSSLSVPERNLLQQESEGPSRQS) show a composition bias toward polar residues. The segment at 40-77 (SPLVTPGSTMQSSLSVPERNLLQQESEGPSRQSGCMPL) is disordered. The segment at residues 94 to 153 (FRKERIVYSKEQQRLLQKHFDECQYPKEKKIVELAVLIGVTKMEIKKWFKNNRAKYRQMN) is a DNA-binding region (homeobox).

The protein belongs to the paired homeobox family. Obox subfamily. As to expression, specifically expressed in oocytes and early embryos.

Its subcellular location is the nucleus. Transcription factor required for zygotic genome activation (ZGA), a critical event in early embryonic development during which the developmental control passes from maternally provided mRNAs to the expression of the zygotic genome after fertilization. Together with other Obox family members, required in early two-cell stage embryos to kick-start the major ZGA wave by facilitating RNA Polymerase II 'pre-configuration', during which RNA Polymerase II relocates from the initial one-cell stage binding targets to ZGA gene promoters and distal enhancers. Mechanistically, promotes recruitment of RNA Polymerase II from (CG-rich) non-ZGA genes to (CG-poor) ZGA genes at the two-cell stage. Binds to regulatory DNA sequences containing a 5'-ACNCCTTTAATCCCAG-3' sequence motif. Most maternal and zygotic Obox family proteins can compensate for one another. The polypeptide is Oocyte-specific homeobox protein 7 (Mus musculus (Mouse)).